The primary structure comprises 526 residues: GMP synthase [glutamine-hydrolyzing] (526 aa).

The 201-residue stretch at 8-208 folds into the Glutamine amidotransferase type-1 domain; that stretch reads CILIIDFGSQ…AVDICRCEVT (201 aa). The Nucleophile role is filled by Cys-85. Active-site residues include His-182 and Glu-184. In terms of domain architecture, GMPS ATP-PPase spans 209–401; it reads WKPVYIVKNI…LGLPLNVVNQ (193 aa). 236-242 is a binding site for ATP; that stretch reads SGGIDSL.

In terms of assembly, homodimer.

It catalyses the reaction XMP + L-glutamine + ATP + H2O = GMP + L-glutamate + AMP + diphosphate + 2 H(+). It functions in the pathway purine metabolism; GMP biosynthesis; GMP from XMP (L-Gln route): step 1/1. Functionally, catalyzes the synthesis of GMP from XMP. This chain is GMP synthase [glutamine-hydrolyzing], found in Blochmanniella floridana.